We begin with the raw amino-acid sequence, 221 residues long: Zingipain-2 (221 aa).

Cystine bridges form between Cys24-Cys65 and Cys58-Cys98. Residue Cys27 is part of the active site. 2 N-linked (GlcNAc...) asparagine glycosylation sites follow: Asn99 and Asn156. A disulfide bond links Cys155 and Cys206. The active site involves His161.

The protein belongs to the peptidase C1 family.

The catalysed reaction is Preferential cleavage of peptides with a proline residue at the P2 position.. Functionally, cysteine proteinase with a specific activity toward peptides with a proline residue at the P2 position. This is Zingipain-2 from Zingiber officinale (Ginger).